A 238-amino-acid polypeptide reads, in one-letter code: Ribose-5-phosphate isomerase A (238 aa).

Residues 30–33 (SGST), 87–90 (DGAD), and 100–103 (KGGG) contribute to the substrate site. Glutamate 109 functions as the Proton acceptor in the catalytic mechanism. Lysine 127 contacts substrate.

It belongs to the ribose 5-phosphate isomerase family. Homodimer.

It catalyses the reaction aldehydo-D-ribose 5-phosphate = D-ribulose 5-phosphate. The protein operates within carbohydrate degradation; pentose phosphate pathway; D-ribose 5-phosphate from D-ribulose 5-phosphate (non-oxidative stage): step 1/1. Functionally, catalyzes the reversible conversion of ribose-5-phosphate to ribulose 5-phosphate. This is Ribose-5-phosphate isomerase A from Prochlorococcus marinus (strain MIT 9303).